The sequence spans 1412 residues: DNA-directed RNA polymerase subunit beta' (1412 aa).

4 residues coordinate Zn(2+): cysteine 70, cysteine 72, cysteine 85, and cysteine 88. The Mg(2+) site is built by aspartate 460, aspartate 462, and aspartate 464. Cysteine 819, cysteine 893, cysteine 900, and cysteine 903 together coordinate Zn(2+). A disordered region spans residues 1393–1412 (EAFEFGTPSAPAEEPQHPAE).

Belongs to the RNA polymerase beta' chain family. The RNAP catalytic core consists of 2 alpha, 1 beta, 1 beta' and 1 omega subunit. When a sigma factor is associated with the core the holoenzyme is formed, which can initiate transcription. Mg(2+) serves as cofactor. It depends on Zn(2+) as a cofactor.

The enzyme catalyses RNA(n) + a ribonucleoside 5'-triphosphate = RNA(n+1) + diphosphate. DNA-dependent RNA polymerase catalyzes the transcription of DNA into RNA using the four ribonucleoside triphosphates as substrates. This Burkholderia mallei (strain NCTC 10229) protein is DNA-directed RNA polymerase subunit beta'.